A 961-amino-acid chain; its full sequence is Phosphofurin acidic cluster sorting protein 1 (961 aa).

Over residues 1–19 the composition is skewed to gly residues; that stretch reads MAERGGAGGGPGGAGGGSS. Disordered stretches follow at residues 1 to 70 and 76 to 95; these read MAER…SSST and VAVA…RTPA. A2 is modified (N-acetylalanine). Over residues 20-30 the composition is skewed to low complexity; sequence QRGSGVAQSPQ. At S28 the chain carries Phosphoserine. The span at 31–46 shows a compositional bias: pro residues; that stretch reads QQPPQQPSQPQQPTPP. T44 bears the Phosphothreonine mark. A compositionally biased stretch (low complexity) spans 51-70; sequence ATSSSSSTSAAAASSSSSST. Y249 bears the Phosphotyrosine mark. Over residues 260 to 271 the composition is skewed to basic and acidic residues; that stretch reads GIKSKLSDRSPD. Disordered regions lie at residues 260–297 and 375–426; these read GIKS…LHGQ and NPSD…GKDT. Over residues 274 to 291 the composition is skewed to acidic residues; that stretch reads NYSEEEEESFSSEQEGSD. Positions 351–375 form a coiled coil; it reads HVSREQIREVEEDLDELYDSLEMYN. Residues S377 and S379 each carry the phosphoserine modification. The segment covering 404–426 has biased composition (polar residues); it reads MSQSSSQTEIGSLNSKGSLGKDT. Phosphoserine occurs at positions 428 and 493. Disordered stretches follow at residues 475 to 540 and 758 to 802; these read EKVK…HSTQ and SPST…SMSS. T502 carries the post-translational modification Phosphothreonine. A phosphoserine mark is found at S517, S526, S527, S529, and S532. The span at 768–802 shows a compositional bias: low complexity; it reads SPVVSLTVPSTSPPSSSGLSRDATATPPSSPSMSS.

It belongs to the PACS family. As to quaternary structure, associates with AP-1 and AP-3 but not with AP-2 complexes. Interacts with FURIN. Forms a ternary complex with furin and AP-1. Interacts with PKD2 (via acidic region). Interacts with SORL1. Interacts with WDR37.

It localises to the golgi apparatus. It is found in the trans-Golgi network. Its function is as follows. Coat protein that is involved in the localization of trans-Golgi network (TGN) membrane proteins that contain acidic cluster sorting motifs. Controls the endosome-to-Golgi trafficking of furin and mannose-6-phosphate receptor by connecting the acidic-cluster-containing cytoplasmic domain of these molecules with the adapter-protein complex-1 (AP-1) of endosomal clathrin-coated membrane pits. Required for normal ER Ca2+ handling in lymphocytes. Together with WDR37, it plays an essential role in lymphocyte development, quiescence and survival. Required for stabilizing peripheral lymphocyte populations. In Rattus norvegicus (Rat), this protein is Phosphofurin acidic cluster sorting protein 1 (Pacs1).